A 194-amino-acid chain; its full sequence is Large ribosomal subunit protein eL15 (194 aa).

Residues 160–194 (RGLTSAGKKGRGLMYKGKGTEKVRPSVRANSKKAK) form a disordered region.

Belongs to the eukaryotic ribosomal protein eL15 family.

The sequence is that of Large ribosomal subunit protein eL15 from Methanococcus maripaludis (strain C7 / ATCC BAA-1331).